A 222-amino-acid polypeptide reads, in one-letter code: Eukaryotic translation initiation factor 3 subunit K (222 aa).

A PCI domain is found at 46–208 (YDLEANLAVL…KIKTKNITEK (163 aa)).

The protein belongs to the eIF-3 subunit K family. In terms of assembly, component of the eukaryotic translation initiation factor 3 (eIF-3) complex. The eIF-3 complex interacts with pix.

The protein localises to the cytoplasm. Its function is as follows. Component of the eukaryotic translation initiation factor 3 (eIF-3) complex, which is involved in protein synthesis of a specialized repertoire of mRNAs and, together with other initiation factors, stimulates binding of mRNA and methionyl-tRNAi to the 40S ribosome. The eIF-3 complex specifically targets and initiates translation of a subset of mRNAs involved in cell proliferation. In Drosophila ananassae (Fruit fly), this protein is Eukaryotic translation initiation factor 3 subunit K.